The following is a 394-amino-acid chain: Penicillopepsin-2 (394 aa).

The signal sequence occupies residues 1 to 20 (MVVFSKITVVLAGLATVASA). Positions 21 to 71 (VPTGTSRKSTFTVNQKARPVAQAKAINLPGMYASALSKYGAAVPASVKAAA) are cleaved as a propeptide — activation peptide. One can recognise a Peptidase A1 domain in the interval 87–391 (YLTPVNVGGT…DANGPRLGFA (305 aa)). Asp-103 is a catalytic residue. Asn-132 is a glycosylation site (N-linked (GlcNAc...) asparagine). Asp-283 is a catalytic residue. Cys-319 and Cys-354 form a disulfide bridge.

It belongs to the peptidase A1 family. Monomer.

It localises to the secreted. It carries out the reaction Hydrolysis of proteins with broad specificity similar to that of pepsin A, preferring hydrophobic residues at P1 and P1', but also cleaving 20-Gly-|-Glu-21 in the B chain of insulin. Clots milk, and activates trypsinogen.. In terms of biological role, secreted aspartic endopeptidase that allows assimilation of proteinaceous substrates. The scissile peptide bond is attacked by a nucleophilic water molecule activated by two aspartic residues in the active site. Shows a broad primary substrate specificity. Favors hydrophobic residues at the P1 and P1' positions, but can also activate trypsinogen and hydrolyze the B chain of insulin between positions 'Gly-20' and 'Glu-21'. This Penicillium janthinellum (Penicillium vitale) protein is Penicillopepsin-2.